Here is a 271-residue protein sequence, read N- to C-terminus: Putative phosphoenolpyruvate synthase regulatory protein (271 aa).

Residue 151-158 (GVSRSGKT) coordinates ADP.

This sequence belongs to the pyruvate, phosphate/water dikinase regulatory protein family. PSRP subfamily.

It carries out the reaction [pyruvate, water dikinase] + ADP = [pyruvate, water dikinase]-phosphate + AMP + H(+). The catalysed reaction is [pyruvate, water dikinase]-phosphate + phosphate + H(+) = [pyruvate, water dikinase] + diphosphate. Its function is as follows. Bifunctional serine/threonine kinase and phosphorylase involved in the regulation of the phosphoenolpyruvate synthase (PEPS) by catalyzing its phosphorylation/dephosphorylation. The polypeptide is Putative phosphoenolpyruvate synthase regulatory protein (Paraburkholderia phytofirmans (strain DSM 17436 / LMG 22146 / PsJN) (Burkholderia phytofirmans)).